Here is a 240-residue protein sequence, read N- to C-terminus: Citrate synthase-lysine N-methyltransferase CSKMT, mitochondrial (240 aa).

The transit peptide at 1–28 directs the protein to the mitochondrion; that stretch reads MAALRRMLHLPSLMMGTCRPFAGSLADS.

It belongs to the methyltransferase superfamily.

The protein resides in the mitochondrion. It carries out the reaction L-lysyl-[citrate synthase] + S-adenosyl-L-methionine = N(6)-methyl-L-lysyl-[citrate synthase] + S-adenosyl-L-homocysteine + H(+). It catalyses the reaction N(6)-methyl-L-lysyl-[citrate synthase] + S-adenosyl-L-methionine = N(6),N(6)-dimethyl-L-lysyl-[citrate synthase] + S-adenosyl-L-homocysteine + H(+). The catalysed reaction is N(6),N(6)-dimethyl-L-lysyl-[citrate synthase] + S-adenosyl-L-methionine = N(6),N(6),N(6)-trimethyl-L-lysyl-[citrate synthase] + S-adenosyl-L-homocysteine + H(+). Citrate synthase-lysine methyltransferase activity is inhibited by S-adenosylhomocysteine (AdoHcy) and oxaloacetate (OAA). In terms of biological role, protein-lysine methyltransferase that selectively trimethylates citrate synthase (CS) in mitochondria. Seems to conduct trimethylation in a highly distributive manner rather than in a processive manner, and thus introduces a single methyl group per binding event. This Homo sapiens (Human) protein is Citrate synthase-lysine N-methyltransferase CSKMT, mitochondrial.